Here is a 346-residue protein sequence, read N- to C-terminus: Elongation factor Ts (346 aa).

An involved in Mg(2+) ion dislocation from EF-Tu region spans residues 80–83 (TDFV).

This sequence belongs to the EF-Ts family.

It is found in the cytoplasm. Associates with the EF-Tu.GDP complex and induces the exchange of GDP to GTP. It remains bound to the aminoacyl-tRNA.EF-Tu.GTP complex up to the GTP hydrolysis stage on the ribosome. The chain is Elongation factor Ts from Streptococcus thermophilus (strain CNRZ 1066).